We begin with the raw amino-acid sequence, 338 residues long: Glycerol-3-phosphate dehydrogenase [NAD(P)+] (338 aa).

3 residues coordinate NADPH: serine 13, tryptophan 14, and lysine 108. Sn-glycerol 3-phosphate is bound by residues lysine 108, glycine 139, and serine 141. Residue alanine 143 coordinates NADPH. Residues lysine 194, aspartate 247, serine 257, arginine 258, and asparagine 259 each coordinate sn-glycerol 3-phosphate. The Proton acceptor role is filled by lysine 194. Residue arginine 258 participates in NADPH binding. Valine 282 and glutamate 284 together coordinate NADPH.

This sequence belongs to the NAD-dependent glycerol-3-phosphate dehydrogenase family.

It is found in the cytoplasm. It carries out the reaction sn-glycerol 3-phosphate + NAD(+) = dihydroxyacetone phosphate + NADH + H(+). The enzyme catalyses sn-glycerol 3-phosphate + NADP(+) = dihydroxyacetone phosphate + NADPH + H(+). The protein operates within membrane lipid metabolism; glycerophospholipid metabolism. Its function is as follows. Catalyzes the reduction of the glycolytic intermediate dihydroxyacetone phosphate (DHAP) to sn-glycerol 3-phosphate (G3P), the key precursor for phospholipid synthesis. In Streptococcus agalactiae serotype III (strain NEM316), this protein is Glycerol-3-phosphate dehydrogenase [NAD(P)+].